We begin with the raw amino-acid sequence, 30 residues long: Kalata-B14 (30 aa).

Positions 1–30 (GLPVCGESCFGGTCNTPGCACDPWPVCTRD) form a cross-link, cyclopeptide (Gly-Asp). Disulfide bonds link cysteine 5–cysteine 19, cysteine 9–cysteine 21, and cysteine 14–cysteine 27.

Post-translationally, this is a cyclic peptide.

Its function is as follows. Probably participates in a plant defense mechanism. This is Kalata-B14 from Oldenlandia affinis.